The primary structure comprises 253 residues: 5'-nucleotidase SurE (253 aa).

A divalent metal cation contacts are provided by Asp8, Asp9, Ser39, and Asn95.

Belongs to the SurE nucleotidase family. A divalent metal cation is required as a cofactor.

It is found in the cytoplasm. The catalysed reaction is a ribonucleoside 5'-phosphate + H2O = a ribonucleoside + phosphate. Nucleotidase that shows phosphatase activity on nucleoside 5'-monophosphates. This Chloroflexus aggregans (strain MD-66 / DSM 9485) protein is 5'-nucleotidase SurE.